A 555-amino-acid polypeptide reads, in one-letter code: Glucose-6-phosphate isomerase (555 aa).

D-glucose 6-phosphate is bound by residues 169–170, 219–224, Gln-364, Glu-368, His-399, and Lys-521; these read GS and SKTFTT. Glu-368 acts as the Proton donor in catalysis. Catalysis depends on residues His-399 and Lys-521.

Belongs to the GPI family. Homodimer.

It localises to the cytoplasm. Its subcellular location is the cytosol. The catalysed reaction is alpha-D-glucose 6-phosphate = beta-D-fructose 6-phosphate. It participates in carbohydrate degradation; glycolysis; D-glyceraldehyde 3-phosphate and glycerone phosphate from D-glucose: step 2/4. In the cytoplasm, catalyzes the conversion of glucose-6-phosphate to fructose-6-phosphate, the second step in glycolysis, and the reverse reaction during gluconeogenesis. The polypeptide is Glucose-6-phosphate isomerase (RAG2) (Kluyveromyces lactis (strain ATCC 8585 / CBS 2359 / DSM 70799 / NBRC 1267 / NRRL Y-1140 / WM37) (Yeast)).